A 139-amino-acid polypeptide reads, in one-letter code: Putative nickel-responsive regulator (139 aa).

Ni(2+) is bound by residues H79, H90, H92, and C98.

It belongs to the transcriptional regulatory CopG/NikR family. It depends on Ni(2+) as a cofactor.

Transcriptional regulator. The sequence is that of Putative nickel-responsive regulator from Nitratidesulfovibrio vulgaris (strain DSM 19637 / Miyazaki F) (Desulfovibrio vulgaris).